We begin with the raw amino-acid sequence, 404 residues long: Formate-dependent phosphoribosylglycinamide formyltransferase (404 aa).

N(1)-(5-phospho-beta-D-ribosyl)glycinamide contacts are provided by residues 25-26 (EL) and glutamate 85. ATP contacts are provided by residues arginine 118, lysine 159, 164–169 (SSGKGQ), 199–202 (EGFI), and glutamate 207. Positions 123–318 (RLAAEELGLA…EFELHARAIL (196 aa)) constitute an ATP-grasp domain. Positions 277 and 289 each coordinate Mg(2+). N(1)-(5-phospho-beta-D-ribosyl)glycinamide is bound by residues aspartate 296, lysine 365, and 372-373 (RR).

The protein belongs to the PurK/PurT family. Homodimer.

It catalyses the reaction N(1)-(5-phospho-beta-D-ribosyl)glycinamide + formate + ATP = N(2)-formyl-N(1)-(5-phospho-beta-D-ribosyl)glycinamide + ADP + phosphate + H(+). It participates in purine metabolism; IMP biosynthesis via de novo pathway; N(2)-formyl-N(1)-(5-phospho-D-ribosyl)glycinamide from N(1)-(5-phospho-D-ribosyl)glycinamide (formate route): step 1/1. Involved in the de novo purine biosynthesis. Catalyzes the transfer of formate to 5-phospho-ribosyl-glycinamide (GAR), producing 5-phospho-ribosyl-N-formylglycinamide (FGAR). Formate is provided by PurU via hydrolysis of 10-formyl-tetrahydrofolate. This chain is Formate-dependent phosphoribosylglycinamide formyltransferase, found in Burkholderia vietnamiensis (strain G4 / LMG 22486) (Burkholderia cepacia (strain R1808)).